The sequence spans 405 residues: Tryptophan synthase beta chain (405 aa).

Lys96 bears the N6-(pyridoxal phosphate)lysine mark.

It belongs to the TrpB family. In terms of assembly, tetramer of two alpha and two beta chains. Pyridoxal 5'-phosphate is required as a cofactor.

The catalysed reaction is (1S,2R)-1-C-(indol-3-yl)glycerol 3-phosphate + L-serine = D-glyceraldehyde 3-phosphate + L-tryptophan + H2O. The protein operates within amino-acid biosynthesis; L-tryptophan biosynthesis; L-tryptophan from chorismate: step 5/5. The beta subunit is responsible for the synthesis of L-tryptophan from indole and L-serine. This is Tryptophan synthase beta chain from Clostridium botulinum (strain Eklund 17B / Type B).